The chain runs to 255 residues: 1-acyl-sn-glycerol-3-phosphate acyltransferase (255 aa).

Residues 78–83 (HVSWLD) carry the HXXXXD motif motif.

This sequence belongs to the 1-acyl-sn-glycerol-3-phosphate acyltransferase family.

It localises to the cell inner membrane. It catalyses the reaction a 1-acyl-sn-glycero-3-phosphate + an acyl-CoA = a 1,2-diacyl-sn-glycero-3-phosphate + CoA. Its pathway is phospholipid metabolism; CDP-diacylglycerol biosynthesis; CDP-diacylglycerol from sn-glycerol 3-phosphate: step 2/3. Functionally, converts lysophosphatidic acid (LPA) into phosphatidic acid by incorporating acyl moiety at the 2 position. The chain is 1-acyl-sn-glycerol-3-phosphate acyltransferase (plsC) from Neisseria meningitidis serogroup B (strain ATCC BAA-335 / MC58).